Here is a 732-residue protein sequence, read N- to C-terminus: MSTESKCPFAGGAYANTEAGAKGNRDWWPKQLNLDILHQHSSLSNPLEENFDYASEFQSLDLDAVVKDLHALMTTSQDWWPADFGHYGGLFIRMAWHSAGTYRIYDGRGGASRGAQRFAPLNSWPDNVNLDKARRLLWPIKQKYGRKISWADLMILAGNVALESMGFKTFGFGGGREDIWEPEKDINWGPETTWLGDERYSGNRELANPLGAVQMGLIYVNPEGPNGNPDPLASARDIRETFARMAMNDEETVALIAGGHTFGKTHGAAPASHVGLEPEGASIEEQGLGWKNSFGTGVGKDAITSGLEVIWTPTPTQWDMSYLETLYGYEWELTKSPAGAHQWKPKGDAGAGTVPDAFDAKKRHQPSMLTSDIALRTDPAYDKICRDFMAHPDKYADAFARAWYKLTHRDMGPITRYLGPLVPKEELIWQDPVPAVDHELVNDADVEALKAEVLASGLTIPQLVSTAWAAASSFRGSDRRGGANGARIRLEPQKNWEANQPAELAKVLAKLEGIQQKFNGAQQGGKKISLADLIVLAGNAGVEAAAKKAGHDVKVPFAPGRTDATQEQTDAPTFAPLEPKADGFRNYAKKGLEDAAAYLLIDKAQLLTLTAPEMTVLVGGLRALGANYGQSKHGVFTSRPETLTNDFFVNLLDMNTAWAKSEKAAGEFEGRDRKTGQIKWTASIVDLVFGSNSQLRALAEVYATSDSTEAFVKDFVAAWTKVMNLDRFDLKK.

Residues Met-1 to Ala-15 form the signal peptide. The tryptophyl-tyrosyl-methioninium (Trp-Tyr) (with M-245) cross-link spans Trp-96–Tyr-219. His-97 (proton acceptor) is an active-site residue. The segment at residues Tyr-219–Met-245 is a cross-link (tryptophyl-tyrosyl-methioninium (Tyr-Met) (with W-96)). His-260 is a binding site for heme b.

It belongs to the peroxidase family. Peroxidase/catalase subfamily. As to quaternary structure, homodimer or homotetramer. The cofactor is heme b. Formation of the three residue Trp-Tyr-Met cross-link is important for the catalase, but not the peroxidase activity of the enzyme.

It catalyses the reaction H2O2 + AH2 = A + 2 H2O. The catalysed reaction is 2 H2O2 = O2 + 2 H2O. Functionally, bifunctional enzyme with both catalase and broad-spectrum peroxidase activity. In Acidobacterium capsulatum (strain ATCC 51196 / DSM 11244 / BCRC 80197 / JCM 7670 / NBRC 15755 / NCIMB 13165 / 161), this protein is Catalase-peroxidase.